The chain runs to 161 residues: Transcription initiation factor TFIID subunit 12 (161 aa).

The disordered stretch occupies residues 15–55 (FSSIKPEPASTPPQGSMANSTAVVKIPGTPGAGGRLSPENN). Lysine 19 is covalently cross-linked (Glycyl lysine isopeptide (Lys-Gly) (interchain with G-Cter in SUMO2)). Residues 26–36 (PPQGSMANSTA) show a composition bias toward polar residues. Phosphothreonine is present on threonine 43. Serine 51 is modified (phosphoserine). A Phosphothreonine modification is found at threonine 59. Residues 59–126 (TKKKLQDLVR…QLHLERQWNM (68 aa)) form the Histone-fold domain.

The protein belongs to the TAF12 family. In terms of assembly, component of the TFIID basal transcription factor complex, composed of TATA-box-binding protein TBP, and a number of TBP-associated factors (TAFs), including TAF1, TAF2, TAF3, TAF4, TAF5, TAF6, TAF7, TAF8, TAF9, TAF10, TAF11, TAF12 and TAF13. Component of the TATA-binding protein-free TAF complex (TFTC), the PCAF histone acetylase complex and the STAGA transcription coactivator-HAT complex. Component of the PCAF complex, at least composed of TADA2L/ADA2, TADA3L/ADA3, TAF5L/PAF65-beta, SUPT3H, TAF6L, TAF9, TAF10, TAF12 and TRRAP. Component of the STAGA transcription coactivator-HAT complex, at least composed of SUPT3H, GCN5L2, TAF5L, TAF6L, STAF65-gamma/SUPT7L, TADA3L, TAD1L, TAF10, TAF12, TRRAP and TAF9. Interacts with ATF7 (via the transactivation domain); the interaction is prevented by sumoylation of ATF7. As to quaternary structure, interacts with TBP; the interaction is direct. Interacts with TAF10; the interaction is direct. Interacts with ATF7, promoting transactivation by ATF7. Does not promote the transactivation of ATF7. In terms of tissue distribution, ubiquitous.

The protein resides in the nucleus. Functionally, the TFIID basal transcription factor complex plays a major role in the initiation of RNA polymerase II (Pol II)-dependent transcription. TFIID recognizes and binds promoters with or without a TATA box via its subunit TBP, a TATA-box-binding protein, and promotes assembly of the pre-initiation complex (PIC). The TFIID complex consists of TBP and TBP-associated factors (TAFs), including TAF1, TAF2, TAF3, TAF4, TAF5, TAF6, TAF7, TAF8, TAF9, TAF10, TAF11, TAF12 and TAF13. Component of the TATA-binding protein-free TAF complex (TFTC), the PCAF histone acetylase complex and the STAGA transcription coactivator-HAT complex. This Homo sapiens (Human) protein is Transcription initiation factor TFIID subunit 12.